We begin with the raw amino-acid sequence, 469 residues long: 3-isopropylmalate dehydratase large subunit (469 aa).

[4Fe-4S] cluster is bound by residues C349, C410, and C413.

Belongs to the aconitase/IPM isomerase family. LeuC type 1 subfamily. As to quaternary structure, heterodimer of LeuC and LeuD. Requires [4Fe-4S] cluster as cofactor.

It carries out the reaction (2R,3S)-3-isopropylmalate = (2S)-2-isopropylmalate. It functions in the pathway amino-acid biosynthesis; L-leucine biosynthesis; L-leucine from 3-methyl-2-oxobutanoate: step 2/4. Functionally, catalyzes the isomerization between 2-isopropylmalate and 3-isopropylmalate, via the formation of 2-isopropylmaleate. The sequence is that of 3-isopropylmalate dehydratase large subunit from Azoarcus sp. (strain BH72).